The primary structure comprises 602 residues: MTNAAGSSSALQNRFRTHYCGSLGPVLQQEKVSLAGWVHRIRDHGGLVFIDLRDHTGICQLVIQPEEKELFEQASHLHAESVIAIEGSVVLRSPETVNARLASGAIEVVVSALTVESNARPLPFPVADELPTSEELRLKYRFIDLRREKIHENIIFRSRVSSAIRRYLEERDFVEIQTPILTSSSPEGARDFLVPSRLHPGKFYALPQAPQQFKQLLMVAGFPRYFQIAPCFRDEDARADRSPGEFYQLDMEMAFIEQDDLFEILEGMFRHLVTSMSKKRITAFPFPRISYRDVMNRFGTDKPDLRIPLEIADVTPLFVNSGFKVFAANTKEGCAVKALVLKGRGTESRLFYDKAEKRAKELGSAGLAYIQFREEGLKGPIVKFMSEGEIASMKEQLSLETGDVVFFAAGKWEAACRIMGGMRTYFGELFTLDHDELSFCWIVDFPMYEYNEEAGKIDFSHNPFSMPQGEMEALETMDPLELLAYQYDIVCNGIELSSGAIRNHRPDIMYRAFEIAGYSKEDVDLRFGHMIEAFKLGAPPHGGIAPGLDRLVMILRDEQNIREVIAFPMNQQAEDLMMSAPSEVTTAQLRELHIKLDLPKED.

Glu187 is an L-aspartate binding site. Positions 211-214 (QQFK) are aspartate. L-aspartate is bound by residues Arg233 and His461. Position 233 to 235 (233 to 235 (RDE)) interacts with ATP. Glu495 is a binding site for ATP. Arg502 serves as a coordination point for L-aspartate. 547 to 550 (GLDR) is an ATP binding site.

The protein belongs to the class-II aminoacyl-tRNA synthetase family. Type 1 subfamily. Homodimer.

The protein resides in the cytoplasm. The enzyme catalyses tRNA(Asx) + L-aspartate + ATP = L-aspartyl-tRNA(Asx) + AMP + diphosphate. Functionally, aspartyl-tRNA synthetase with relaxed tRNA specificity since it is able to aspartylate not only its cognate tRNA(Asp) but also tRNA(Asn). Reaction proceeds in two steps: L-aspartate is first activated by ATP to form Asp-AMP and then transferred to the acceptor end of tRNA(Asp/Asn). The protein is Aspartate--tRNA(Asp/Asn) ligase of Chlorobium phaeovibrioides (strain DSM 265 / 1930) (Prosthecochloris vibrioformis (strain DSM 265)).